The following is an 88-amino-acid chain: Small ribosomal subunit protein uS17 (88 aa).

Belongs to the universal ribosomal protein uS17 family. Part of the 30S ribosomal subunit.

Functionally, one of the primary rRNA binding proteins, it binds specifically to the 5'-end of 16S ribosomal RNA. This chain is Small ribosomal subunit protein uS17, found in Prochlorococcus marinus (strain MIT 9515).